Here is a 141-residue protein sequence, read N- to C-terminus: Large ribosomal subunit protein bL17 (141 aa).

Belongs to the bacterial ribosomal protein bL17 family. As to quaternary structure, part of the 50S ribosomal subunit. Contacts protein L32.

This chain is Large ribosomal subunit protein bL17, found in Gluconacetobacter diazotrophicus (strain ATCC 49037 / DSM 5601 / CCUG 37298 / CIP 103539 / LMG 7603 / PAl5).